Consider the following 353-residue polypeptide: NADH-ubiquinone oxidoreductase chain 2 (353 aa).

Transmembrane regions (helical) follow at residues Ser-4–His-24, Phe-60–Leu-80, Ile-96–Pro-116, Phe-139–Cys-159, Ile-198–Ile-218, Gly-241–Leu-261, Asn-274–Leu-294, and Val-330–Trp-350.

It belongs to the complex I subunit 2 family.

The protein localises to the mitochondrion inner membrane. It carries out the reaction a ubiquinone + NADH + 5 H(+)(in) = a ubiquinol + NAD(+) + 4 H(+)(out). Functionally, core subunit of the mitochondrial membrane respiratory chain NADH dehydrogenase (Complex I) that is believed to belong to the minimal assembly required for catalysis. Complex I functions in the transfer of electrons from NADH to the respiratory chain. The immediate electron acceptor for the enzyme is believed to be ubiquinone. The chain is NADH-ubiquinone oxidoreductase chain 2 (ND2) from Pisaster ochraceus (Ochre sea star).